Here is a 72-residue protein sequence, read N- to C-terminus: Gene 42 protein (72 aa).

This chain is Gene 42 protein (42), found in Mycobacterium phage L5 (Mycobacteriophage L5).